The sequence spans 531 residues: Type 2 DNA topoisomerase 6 subunit B (531 aa).

Residues asparagine 42, aspartate 76, 97-98 (SK), 106-113 (GMYGLGVK), and lysine 427 each bind ATP.

It belongs to the TOP6B family. In terms of assembly, homodimer. Heterotetramer of two Top6A and two Top6B chains.

It catalyses the reaction ATP-dependent breakage, passage and rejoining of double-stranded DNA.. Relaxes both positive and negative superturns and exhibits a strong decatenase activity. The polypeptide is Type 2 DNA topoisomerase 6 subunit B (Metallosphaera sedula (strain ATCC 51363 / DSM 5348 / JCM 9185 / NBRC 15509 / TH2)).